Consider the following 305-residue polypeptide: tRNA dimethylallyltransferase (305 aa).

An ATP-binding site is contributed by 11-18 (GPTAVGKT). 13–18 (TAVGKT) contacts substrate. Residues 36 to 39 (DSMQ) form an interaction with substrate tRNA region.

This sequence belongs to the IPP transferase family. In terms of assembly, monomer. It depends on Mg(2+) as a cofactor.

It catalyses the reaction adenosine(37) in tRNA + dimethylallyl diphosphate = N(6)-dimethylallyladenosine(37) in tRNA + diphosphate. In terms of biological role, catalyzes the transfer of a dimethylallyl group onto the adenine at position 37 in tRNAs that read codons beginning with uridine, leading to the formation of N6-(dimethylallyl)adenosine (i(6)A). The protein is tRNA dimethylallyltransferase of Listeria innocua serovar 6a (strain ATCC BAA-680 / CLIP 11262).